A 350-amino-acid chain; its full sequence is Methionine import ATP-binding protein MetN (350 aa).

The ABC transporter domain maps to 2-241 (IQIKNLKKEY…PQAPVTRSFV (240 aa)). 38-45 (GHSGAGKS) is an ATP binding site.

The protein belongs to the ABC transporter superfamily. Methionine importer (TC 3.A.1.24) family. As to quaternary structure, the complex is composed of two ATP-binding proteins (MetN), two transmembrane proteins (MetI) and a solute-binding protein (MetQ).

It is found in the cell inner membrane. The catalysed reaction is L-methionine(out) + ATP + H2O = L-methionine(in) + ADP + phosphate + H(+). It catalyses the reaction D-methionine(out) + ATP + H2O = D-methionine(in) + ADP + phosphate + H(+). In terms of biological role, part of the ABC transporter complex MetNIQ involved in methionine import. Responsible for energy coupling to the transport system. This is Methionine import ATP-binding protein MetN from Francisella tularensis subsp. tularensis (strain FSC 198).